A 210-amino-acid chain; its full sequence is Leucyl/phenylalanyl-tRNA--protein transferase (210 aa).

It belongs to the L/F-transferase family.

The protein localises to the cytoplasm. It catalyses the reaction N-terminal L-lysyl-[protein] + L-leucyl-tRNA(Leu) = N-terminal L-leucyl-L-lysyl-[protein] + tRNA(Leu) + H(+). It carries out the reaction N-terminal L-arginyl-[protein] + L-leucyl-tRNA(Leu) = N-terminal L-leucyl-L-arginyl-[protein] + tRNA(Leu) + H(+). The catalysed reaction is L-phenylalanyl-tRNA(Phe) + an N-terminal L-alpha-aminoacyl-[protein] = an N-terminal L-phenylalanyl-L-alpha-aminoacyl-[protein] + tRNA(Phe). Functionally, functions in the N-end rule pathway of protein degradation where it conjugates Leu, Phe and, less efficiently, Met from aminoacyl-tRNAs to the N-termini of proteins containing an N-terminal arginine or lysine. The polypeptide is Leucyl/phenylalanyl-tRNA--protein transferase (Ruegeria sp. (strain TM1040) (Silicibacter sp.)).